The sequence spans 92 residues: uncharacterized protein (92 aa).

2 consecutive transmembrane segments (helical) span residues 34–54 and 65–85; these read GLGI…FMFG and LLYI…ASTV.

It localises to the cell membrane. This is an uncharacterized protein from Bacillus anthracis.